The primary structure comprises 151 residues: uncharacterized protein (151 aa).

2 BON domains span residues 2–68 and 78–146; these read DDAA…AVDK and IDSA…RLKH.

This is an uncharacterized protein from Anaplasma centrale.